The sequence spans 631 residues: DNA mismatch repair protein MutL (631 aa).

This sequence belongs to the DNA mismatch repair MutL/HexB family.

Its function is as follows. This protein is involved in the repair of mismatches in DNA. It is required for dam-dependent methyl-directed DNA mismatch repair. May act as a 'molecular matchmaker', a protein that promotes the formation of a stable complex between two or more DNA-binding proteins in an ATP-dependent manner without itself being part of a final effector complex. This chain is DNA mismatch repair protein MutL, found in Lactobacillus acidophilus (strain ATCC 700396 / NCK56 / N2 / NCFM).